The following is a 195-amino-acid chain: ALK and LTK ligand 2b (195 aa).

2 disulfides stabilise this stretch: Cys-156–Cys-192 and Cys-170–Cys-179.

This sequence belongs to the ALKAL family. Homodimer. Highly expressed in the swim bladder and single cells of unknown identity in the head.

It localises to the secreted. The protein resides in the cell membrane. Functionally, cytokine that acts as a physiological ligand for receptor tyrosine kinases LTK and ALK. Required for neural crest cell differentiation and iridophore development during embryonic iridophore development and adult stripe development by acting as a receptor for LTK. Also required for iridophore formation in the adult eye. The protein is ALK and LTK ligand 2b of Danio rerio (Zebrafish).